A 357-amino-acid chain; its full sequence is Homoserine O-succinyltransferase (357 aa).

Cys-146 serves as the catalytic Acyl-thioester intermediate. Substrate is bound by residues Lys-167 and Ser-196. The active-site Proton acceptor is the His-239. Glu-241 is a catalytic residue. Arg-253 serves as a coordination point for substrate.

The protein belongs to the MetA family.

It localises to the cytoplasm. The enzyme catalyses L-homoserine + succinyl-CoA = O-succinyl-L-homoserine + CoA. The protein operates within amino-acid biosynthesis; L-methionine biosynthesis via de novo pathway; O-succinyl-L-homoserine from L-homoserine: step 1/1. Transfers a succinyl group from succinyl-CoA to L-homoserine, forming succinyl-L-homoserine. The protein is Homoserine O-succinyltransferase of Allochromatium vinosum (strain ATCC 17899 / DSM 180 / NBRC 103801 / NCIMB 10441 / D) (Chromatium vinosum).